A 152-amino-acid polypeptide reads, in one-letter code: Protein-export protein SecB (152 aa).

This sequence belongs to the SecB family. As to quaternary structure, homotetramer, a dimer of dimers. One homotetramer interacts with 1 SecA dimer.

The protein localises to the cytoplasm. In terms of biological role, one of the proteins required for the normal export of preproteins out of the cell cytoplasm. It is a molecular chaperone that binds to a subset of precursor proteins, maintaining them in a translocation-competent state. It also specifically binds to its receptor SecA. The polypeptide is Protein-export protein SecB (Rickettsia typhi (strain ATCC VR-144 / Wilmington)).